The chain runs to 111 residues: PCNA-associated factor (111 aa).

The span at 1 to 10 (MVRTKANSVP) shows a compositional bias: polar residues. Positions 1-111 (MVRTKANSVP…PPDHTDDEKE (111 aa)) are disordered. Position 8 is a phosphoserine (serine 8). Lysine 15 is covalently cross-linked (Glycyl lysine isopeptide (Lys-Gly) (interchain with G-Cter in ubiquitin)). Positions 23–34 (RKVLGSSTSAAN) match the D-box motif. An N6-acetyllysine; alternate modification is found at lysine 24. Residue lysine 24 forms a Glycyl lysine isopeptide (Lys-Gly) (interchain with G-Cter in ubiquitin); alternate linkage. Residues 27 to 39 (GSSTSAANSTPLS) show a composition bias toward polar residues. Phosphoserine occurs at positions 28, 31, and 72. A PIP-box motif is present at residues 62-72 (QKGIGEFFSLS). Positions 74-84 (KDSEKENRIPE) are enriched in basic and acidic residues. The KEN box signature appears at 78 to 80 (KEN). The short motif at 85–97 (EAGSSGLGKAKRK) is the Initiation motif element.

In terms of assembly, interacts (when monoubiquitinated at Lys-15 and Lys-24) with PCNA. Interacts with isoform 2/p33ING1b of ING1. Interacts with BRCA1. In terms of processing, monoubiquitinated at Lys-15 and Lys-24 during normal S phase, promoting its association with PCNA. Also diubiquitinated at these 2 sites. Following DNA damage, monoubiquitin chains at Lys-15 and Lys-24 are probably extended, leading to disrupt the interaction with PCNA. Polyubiquitinated by the APC/C complex at the mitotic exit, leading to its degradation by the proteasome.

It localises to the nucleus. The protein localises to the cytoplasm. The protein resides in the perinuclear region. Its function is as follows. PCNA-binding protein that acts as a regulator of DNA repair during DNA replication. Following DNA damage, the interaction with PCNA is disrupted, facilitating the interaction between monoubiquitinated PCNA and the translesion DNA synthesis DNA polymerase eta (POLH) at stalled replisomes, facilitating the bypass of replication-fork-blocking lesions. Also acts as a regulator of centrosome number. The chain is PCNA-associated factor from Bos taurus (Bovine).